A 61-amino-acid chain; its full sequence is Short neurotoxin 1 (61 aa).

4 cysteine pairs are disulfide-bonded: Cys3/Cys23, Cys17/Cys40, Cys42/Cys53, and Cys54/Cys59.

Belongs to the three-finger toxin family. Short-chain subfamily. Type I alpha-neurotoxin sub-subfamily. Expressed by the venom gland.

It localises to the secreted. Binds to muscle nicotinic acetylcholine receptor (nAChR) and inhibit acetylcholine from binding to the receptor, thereby impairing neuromuscular transmission. In Naja annulata annulata (Banded water cobra), this protein is Short neurotoxin 1.